A 117-amino-acid chain; its full sequence is Large ribosomal subunit protein bL19 (117 aa).

This sequence belongs to the bacterial ribosomal protein bL19 family.

Functionally, this protein is located at the 30S-50S ribosomal subunit interface and may play a role in the structure and function of the aminoacyl-tRNA binding site. This is Large ribosomal subunit protein bL19 from Methylibium petroleiphilum (strain ATCC BAA-1232 / LMG 22953 / PM1).